The chain runs to 474 residues: Aromatic amino acid aminotransferase C56E4.03 (474 aa).

It belongs to the class-I pyridoxal-phosphate-dependent aminotransferase family. It depends on pyridoxal 5'-phosphate as a cofactor.

The protein localises to the cytoplasm. It catalyses the reaction an aromatic L-alpha-amino acid + 2-oxoglutarate = an aromatic oxo-acid + L-glutamate. In terms of biological role, has aromatic amino acid transaminase activity. The polypeptide is Aromatic amino acid aminotransferase C56E4.03 (Schizosaccharomyces pombe (strain 972 / ATCC 24843) (Fission yeast)).